A 329-amino-acid polypeptide reads, in one-letter code: Ferredoxin--NAD(P)(+) reductase CarAd (329 aa).

The region spanning 2 to 92 (YQLKIEGQAP…DLRIKVAVQD (91 aa)) is the 2Fe-2S ferredoxin-type domain. C35, C40, C43, and C76 together coordinate [2Fe-2S] cluster. In terms of domain architecture, FAD-binding FR-type spans 100-200 (ISRMEAEVVE…TGPMGTSFFR (101 aa)).

In terms of assembly, monomer. Carbazole 1,9a-dioxygenase complex consists of a terminal oxygenase component CarAa, a ferredoxin reductase component CarAd and a ferredoxin component CarAc. The cofactor is [2Fe-2S] cluster. Requires FAD as cofactor.

It catalyses the reaction 2 reduced [2Fe-2S]-[ferredoxin] + NAD(+) + H(+) = 2 oxidized [2Fe-2S]-[ferredoxin] + NADH. It carries out the reaction 2 reduced [2Fe-2S]-[ferredoxin] + NADP(+) + H(+) = 2 oxidized [2Fe-2S]-[ferredoxin] + NADPH. In terms of biological role, part of the multicomponent carbazole 1,9a-dioxygenase (CARDO), that converts carbazole (CAR) into 2-aminobiphenyl-2,3-diol. It can use both NAD and NADP as electron donors, but NAD is supposed to be the physiological electron donor. This is Ferredoxin--NAD(P)(+) reductase CarAd (carAd) from Metapseudomonas resinovorans (Pseudomonas resinovorans).